Consider the following 392-residue polypeptide: Succinyl-diaminopimelate desuccinylase (392 aa).

H76 is a binding site for Zn(2+). D78 is an active-site residue. D107 contacts Zn(2+). The Proton acceptor role is filled by E143. Zn(2+)-binding residues include E144, E172, and H357.

Belongs to the peptidase M20A family. DapE subfamily. As to quaternary structure, homodimer. Requires Zn(2+) as cofactor. It depends on Co(2+) as a cofactor.

The catalysed reaction is N-succinyl-(2S,6S)-2,6-diaminopimelate + H2O = (2S,6S)-2,6-diaminopimelate + succinate. The protein operates within amino-acid biosynthesis; L-lysine biosynthesis via DAP pathway; LL-2,6-diaminopimelate from (S)-tetrahydrodipicolinate (succinylase route): step 3/3. Catalyzes the hydrolysis of N-succinyl-L,L-diaminopimelic acid (SDAP), forming succinate and LL-2,6-diaminopimelate (DAP), an intermediate involved in the bacterial biosynthesis of lysine and meso-diaminopimelic acid, an essential component of bacterial cell walls. The chain is Succinyl-diaminopimelate desuccinylase from Helicobacter hepaticus (strain ATCC 51449 / 3B1).